Reading from the N-terminus, the 259-residue chain is Thiazole synthase (259 aa).

The active-site Schiff-base intermediate with DXP is Lys99. 1-deoxy-D-xylulose 5-phosphate-binding positions include Gly160, 186 to 187, and 208 to 209; these read AG and NT.

It belongs to the ThiG family. Homotetramer. Forms heterodimers with either ThiH or ThiS.

The protein localises to the cytoplasm. It catalyses the reaction [ThiS sulfur-carrier protein]-C-terminal-Gly-aminoethanethioate + 2-iminoacetate + 1-deoxy-D-xylulose 5-phosphate = [ThiS sulfur-carrier protein]-C-terminal Gly-Gly + 2-[(2R,5Z)-2-carboxy-4-methylthiazol-5(2H)-ylidene]ethyl phosphate + 2 H2O + H(+). Its pathway is cofactor biosynthesis; thiamine diphosphate biosynthesis. Catalyzes the rearrangement of 1-deoxy-D-xylulose 5-phosphate (DXP) to produce the thiazole phosphate moiety of thiamine. Sulfur is provided by the thiocarboxylate moiety of the carrier protein ThiS. In vitro, sulfur can be provided by H(2)S. The polypeptide is Thiazole synthase (Porphyromonas gingivalis (strain ATCC BAA-308 / W83)).